We begin with the raw amino-acid sequence, 671 residues long: Phospholipid:diacylglycerol acyltransferase 1 (671 aa).

Residues 1 to 46 are disordered; sequence MPLIHRKKPTEKPSTPPSEEVVHDEDSQKKPHESSKSHHKKSNGGG. Residues 1 to 54 lie on the Cytoplasmic side of the membrane; that stretch reads MPLIHRKKPTEKPSTPPSEEVVHDEDSQKKPHESSKSHHKKSNGGGKWSCIDSC. The span at 20–36 shows a compositional bias: basic and acidic residues; the sequence is EVVHDEDSQKKPHESSK. A helical transmembrane segment spans residues 55–75; the sequence is CWFIGCVCVTWWFLLFLYNAM. Over 76 to 671 the chain is Lumenal; that stretch reads PASFPQYVTE…EWSERIDLKL (596 aa). Asparagine 161 carries N-linked (GlcNAc...) asparagine glycosylation. Serine 254 functions as the Acyl-ester intermediate in the catalytic mechanism. N-linked (GlcNAc...) asparagine glycosylation is found at asparagine 381 and asparagine 434. Catalysis depends on charge relay system residues aspartate 573 and histidine 626. Asparagine 647 carries N-linked (GlcNAc...) asparagine glycosylation.

This sequence belongs to the AB hydrolase superfamily. Lipase family. In terms of tissue distribution, ubiquitous. Highest expression in young developing seeds.

Its subcellular location is the membrane. It catalyses the reaction a glycerophospholipid + a 1,2-diacyl-sn-glycerol = a monoacylglycerophospholipid + a triacyl-sn-glycerol. The protein operates within glycerolipid metabolism; triacylglycerol biosynthesis. In terms of biological role, triacylglycerol formation by an acyl-CoA independent pathway. The enzyme preferentially transfers acyl groups from the sn-2 position of a phospholipid to diacylglycerol, thus forming an sn-1-lysophospholipid. Involved in epoxy and hydroxy fatty acid accumulation in seeds. Has complementary functions with DAG1 that are essential for triacylglycerol synthesis and normal development of both seeds and pollen. This chain is Phospholipid:diacylglycerol acyltransferase 1 (PDAT1), found in Arabidopsis thaliana (Mouse-ear cress).